The sequence spans 649 residues: MAADDIDVYGQQEALRRLYERALTTPLPNYAAPTSFELNSAGIASTETYDVIITGGGPAGLTLAVLLAHQGLRAPGAVLCVERRPHPLLAGQADGLTCRTMEMFKELGLYDEVLKVGHEVAEMVMWAELPGTKGIQRVTHQASNENMTPSRVASLVACSQGQIERILELELASYAPGTLKRGAEIIHVEMDARMDTKYPVVVSIRDESGHVTFARCRFLVGADGAHSVVRKCMGISMVGDLSDRVWGVIDFPAETDFPDIRRSGHVHSALGSVMHFPREQSADGDWLTRFYVDMDEANAGNMDSQSAQVGPLTPQHILDRISRTFHPYHLQIKPGTKVEWFSKYSVRRCIASDYIRHDFQGLPRVLLVGDACHTHSPKIGQGMNVSMADSYNLAWKLAHVLLGISSDPRSILESYASERYPVGRQLVEIDKAWNTLEWNTKITGREENYQDTRKDLLRTISGFVSGYGIQYSSGYLIRTARYLNEECSLQAGSRLQHTVMSRFADGLTVDLHDEIVPNGRWKLLVFATQYLSCQKGPFAQAVRSIFENLIPIFLPGCITPIIILPDLVSNVDNGGTSLTRSVDWAVFPSRIKCMAEMKTYVSQRAYDGYRISCHEGAVVLLRPDGVISIIDDLHATEVTSFLKTVVRTL.

FAD-binding residues include Gln-92, Ile-185, Tyr-344, Asp-370, and Ser-386.

Belongs to the PheA/TfdB FAD monooxygenase family. As to quaternary structure, homodimer. It depends on FAD as a cofactor.

Its pathway is secondary metabolite biosynthesis. Functionally, nonribosomal peptide synthetase that mediates the biosynthesis of usterphenyllins and uscandidusins, p-terphenyl derivatives. Within the pathway, ucdD catalyzes the formation of 3,15-dihydroxyterphenyllin via dihydroxylation at C-3 of ring A and C-15 of ring C of the terphenyllin intermediate. The pathway begin with the biosynthesis of 4-hydroxyphenylpyruvate (HPPA) from L-tyrosine, possibly by the aminotransferase ucdG. The nonribosomal peptide synthetase ucdA then condenses two HPPA units to produce atromentin. The key step in this pathway is the reduction and dehydration of atromentin to form a terphenyl triol intermediate, performed by the NAD-dependent dehydrogenase ucdB. Further O-methylation by the methyltransferase ucdC forms terphenyllin carrying two methoxy moieties at C-9 and C-12, and subsequent dihydroxylation at C-3 of ring A and C-15 of ring C by the flavin-dependent oxygenase ucdD leads to 3,15-dihydroxyterphenyllin. Prenylation by ucdE at position C-5 of ring A forms usterphenyllin B, and is followed by a second prenylation at position C-14 of ring C to form usterphenyllin A. The following furan ring formation that leads to uscandidusins A and B was proven to be an unexpected spontaneous non-enzymatic reaction. In Aspergillus ustus, this protein is Flavin-dependent oxygenase ucdD.